A 508-amino-acid chain; its full sequence is Glycerol kinase (508 aa).

Threonine 14 contacts ADP. Residues threonine 14, threonine 15, and serine 16 each coordinate ATP. Threonine 14 lines the sn-glycerol 3-phosphate pocket. Arginine 18 contacts ADP. The sn-glycerol 3-phosphate site is built by arginine 84, glutamate 85, and tyrosine 136. Residues arginine 84, glutamate 85, and tyrosine 136 each contribute to the glycerol site. Residue histidine 232 is modified to Phosphohistidine; by HPr. Residue aspartate 246 participates in sn-glycerol 3-phosphate binding. Glycerol contacts are provided by aspartate 246 and glutamine 247. ADP is bound by residues threonine 268 and glycine 311. ATP contacts are provided by threonine 268, glycine 311, glutamine 315, and glycine 412. Glycine 412 and asparagine 416 together coordinate ADP.

The protein belongs to the FGGY kinase family. In terms of assembly, homotetramer and homodimer (in equilibrium). Post-translationally, the phosphoenolpyruvate-dependent sugar phosphotransferase system (PTS), including enzyme I, and histidine-containing protein (HPr) are required for the phosphorylation, which leads to the activation of the enzyme.

It carries out the reaction glycerol + ATP = sn-glycerol 3-phosphate + ADP + H(+). It functions in the pathway polyol metabolism; glycerol degradation via glycerol kinase pathway; sn-glycerol 3-phosphate from glycerol: step 1/1. Its activity is regulated as follows. Activated by phosphorylation and inhibited by fructose 1,6-bisphosphate (FBP). In terms of biological role, key enzyme in the regulation of glycerol uptake and metabolism. Catalyzes the phosphorylation of glycerol to yield sn-glycerol 3-phosphate. This chain is Glycerol kinase, found in Streptococcus pyogenes serotype M4 (strain MGAS10750).